The chain runs to 356 residues: tRNA N6-adenosine threonylcarbamoyltransferase (356 aa).

Fe cation is bound by residues H115 and H119. Residues 138–142 (LVSGG), D171, G184, and N283 contribute to the substrate site. Residue D311 coordinates Fe cation.

This sequence belongs to the KAE1 / TsaD family. It depends on Fe(2+) as a cofactor.

The protein resides in the cytoplasm. It catalyses the reaction L-threonylcarbamoyladenylate + adenosine(37) in tRNA = N(6)-L-threonylcarbamoyladenosine(37) in tRNA + AMP + H(+). In terms of biological role, required for the formation of a threonylcarbamoyl group on adenosine at position 37 (t(6)A37) in tRNAs that read codons beginning with adenine. Is involved in the transfer of the threonylcarbamoyl moiety of threonylcarbamoyl-AMP (TC-AMP) to the N6 group of A37, together with TsaE and TsaB. TsaD likely plays a direct catalytic role in this reaction. The sequence is that of tRNA N6-adenosine threonylcarbamoyltransferase from Prochlorococcus marinus (strain SARG / CCMP1375 / SS120).